The following is a 172-amino-acid chain: MKLFQLLLLVLTISSFIISNNGLVESHQGRMHRGSGERHHRAGGNQQQPQPPSEQQVESSYNSNDDGSSNSWWSATSWYGAGTTSWYSGGTTSNPVGTTTWYSGGTTSNPVGTTSWYSGGFGTYDSDSSSFSYENSSNETIVIYINPVTLVFTLVLLLTFIVLTITQSLRKY.

The first 22 residues, 1-22 (MKLFQLLLLVLTISSFIISNNG), serve as a signal peptide directing secretion. The Extracellular portion of the chain corresponds to 23–140 (LVESHQGRMH…FSYENSSNET (118 aa)). The interval 27–69 (HQGRMHRGSGERHHRAGGNQQQPQPPSEQQVESSYNSNDDGSS) is disordered. The segment covering 29-42 (GRMHRGSGERHHRA) has biased composition (basic residues). Over residues 53 to 69 (SEQQVESSYNSNDDGSS) the composition is skewed to low complexity. N135 and N138 each carry an N-linked (GlcNAc...) asparagine glycan. A helical membrane pass occupies residues 141–161 (IVIYINPVTLVFTLVLLLTFI). Topologically, residues 162–172 (VLTITQSLRKY) are cytoplasmic.

The protein resides in the membrane. This is an uncharacterized protein from Dictyostelium discoideum (Social amoeba).